Here is a 288-residue protein sequence, read N- to C-terminus: Elongation factor Ts (288 aa).

The tract at residues 82–85 (TDFV) is involved in Mg(2+) ion dislocation from EF-Tu.

Belongs to the EF-Ts family.

Its subcellular location is the cytoplasm. Its function is as follows. Associates with the EF-Tu.GDP complex and induces the exchange of GDP to GTP. It remains bound to the aminoacyl-tRNA.EF-Tu.GTP complex up to the GTP hydrolysis stage on the ribosome. The protein is Elongation factor Ts of Chlorobium limicola (strain DSM 245 / NBRC 103803 / 6330).